Reading from the N-terminus, the 500-residue chain is MKIEMKKITKSFGANRVLEGVDFTVESGEVHALMGENGAGKSTLMNILTGLYQANSGEILVDGQPTTYSGPMEAEQHGISFIHQEMNNFLEMSVVDNMFLNKELRTKFGLMDNKAMREQAAHYLSLLGAKLDVEQPIGNLSVGRQQMVEIAKSLMTDAKIIIMDEPTAALTETEIDQLFGVVRRLKEKGVGFIYISHRMEEIFEIADKVTVMRDGLSITEYATKDVTMKQLVKDMVGREIDDFYPDRTPDHGPVAMEVKGLTENGVFKDVSFTVHQGEILGFSGLMGAGRTEIMRAIFGIDKYQSGEILLDGKPVKIRDPQDAIRHNIGFLTENRKDEGLILEDSLHDNIVLPSIDGFVKHGLVDDKATDEFVRMLMKRLTVKAMGPDVSAGSLSGGNQQKVVLAKWIGSGSKVLILDEPTRGVDVGAKREIYDLMNELTDRHVAIIMISSDLPEVLGMSDRIAVVYEGKITGILDGKTATQESIMTLATGGVEEHAGAI.

ABC transporter domains lie at 3–239 (IEMK…VGRE) and 246–493 (DRTP…TGGV). Residue 35–42 (GENGAGKS) participates in ATP binding.

This sequence belongs to the ABC transporter superfamily. Ribose importer (TC 3.A.1.2.1) family. The complex is composed of an ATP-binding protein (RbsA), two transmembrane proteins (RbsC) and a solute-binding protein (RbsB).

The protein resides in the cell membrane. It catalyses the reaction D-ribose(out) + ATP + H2O = D-ribose(in) + ADP + phosphate + H(+). Its function is as follows. Part of the ABC transporter complex RbsABC involved in ribose import. Responsible for energy coupling to the transport system. This is Ribose import ATP-binding protein RbsA from Lacticaseibacillus paracasei (strain ATCC 334 / BCRC 17002 / CCUG 31169 / CIP 107868 / KCTC 3260 / NRRL B-441) (Lactobacillus paracasei).